Reading from the N-terminus, the 198-residue chain is Phomoidride biosynthesis cluster protein N (198 aa).

Positions 1–18 (MILFSIFVALLAATRAQS) are cleaved as a signal peptide. N93 carries N-linked (GlcNAc...) asparagine glycosylation.

This sequence belongs to the tstN family.

Functionally, phosphatidylethanolamine-binding protein; part of the gene cluster that mediates the biosynthesis of the antihypercholesterolemic agents phomoidrides which are dimeric anhydrides. Within the pathway, tstNB is not essential for dimerization and its function has still to be determined. The pathway begins with the highly reducing polyketide synthase tstA that catalyzes the formation of a C12-fatty acyl-ACP, starting from one acetate and 5 malonate units. The hydrolase tstM is involved in the release of the C12-fatty acyl chain from phiA. The alkylcitrate synthase (ACS) tstJ and the alkylcitrate dehydratase (ACDH) tstI then give rise to decarboxylated monomeric anhydrides by coupling the C12-fatty acyl chain with oxalacetic acid. The cyclase tstC is responsible for the dimerization of the monomeric anhydrides which leads to the production of prephomoidride that contains the characteristic bicyclo[4.3.1]deca-1,6-diene system of phomoidrides. Iterative oxidation catalyzed by the alpha-ketoglutarate-dependent dioxygenase tstK produced then phomoidride A. Finally, the methyltransferase tstE converts phomoidride A to phomoidride B via an acetalization reaction. The phosphatidylethanolamine-binding protein tstB and tstN are not essential for dimerization and their functions have still to be determined. This is Phomoidride biosynthesis cluster protein N from Talaromyces stipitatus (strain ATCC 10500 / CBS 375.48 / QM 6759 / NRRL 1006) (Penicillium stipitatum).